A 689-amino-acid chain; its full sequence is tRNA 5-methylaminomethyl-2-thiouridine biosynthesis bifunctional protein MnmC (689 aa).

The tRNA (mnm(5)s(2)U34)-methyltransferase stretch occupies residues 1-245; that stretch reads MNQRPIQTAT…KREMLTGTLP (245 aa). Residues 270–689 form an FAD-dependent cmnm(5)s(2)U34 oxidoreductase region; that stretch reads IGGGIVSALT…RSPATQESSR (420 aa).

This sequence in the N-terminal section; belongs to the methyltransferase superfamily. tRNA (mnm(5)s(2)U34)-methyltransferase family. It in the C-terminal section; belongs to the DAO family. FAD is required as a cofactor.

The protein resides in the cytoplasm. The enzyme catalyses 5-aminomethyl-2-thiouridine(34) in tRNA + S-adenosyl-L-methionine = 5-methylaminomethyl-2-thiouridine(34) in tRNA + S-adenosyl-L-homocysteine + H(+). Functionally, catalyzes the last two steps in the biosynthesis of 5-methylaminomethyl-2-thiouridine (mnm(5)s(2)U) at the wobble position (U34) in tRNA. Catalyzes the FAD-dependent demodification of cmnm(5)s(2)U34 to nm(5)s(2)U34, followed by the transfer of a methyl group from S-adenosyl-L-methionine to nm(5)s(2)U34, to form mnm(5)s(2)U34. The chain is tRNA 5-methylaminomethyl-2-thiouridine biosynthesis bifunctional protein MnmC from Yersinia pseudotuberculosis serotype O:1b (strain IP 31758).